The primary structure comprises 215 residues: Glycerol-3-phosphate acyltransferase (215 aa).

The next 5 helical transmembrane spans lie at 1–21, 57–77, 85–105, 126–146, and 165–185; these read MAFL…SIPT, IFVL…VKLW, MIPL…AVLG, VLLV…LAML, and VLMF…IVGL.

Belongs to the PlsY family. In terms of assembly, probably interacts with PlsX.

It is found in the cell inner membrane. The enzyme catalyses an acyl phosphate + sn-glycerol 3-phosphate = a 1-acyl-sn-glycero-3-phosphate + phosphate. It participates in lipid metabolism; phospholipid metabolism. Catalyzes the transfer of an acyl group from acyl-phosphate (acyl-PO(4)) to glycerol-3-phosphate (G3P) to form lysophosphatidic acid (LPA). This enzyme utilizes acyl-phosphate as fatty acyl donor, but not acyl-CoA or acyl-ACP. This Crocosphaera subtropica (strain ATCC 51142 / BH68) (Cyanothece sp. (strain ATCC 51142)) protein is Glycerol-3-phosphate acyltransferase.